The chain runs to 856 residues: DNA mismatch repair protein MutS (856 aa).

G615–S622 provides a ligand contact to ATP. A compositionally biased stretch (polar residues) spans E798–K807. The interval E798–Q817 is disordered.

Belongs to the DNA mismatch repair MutS family.

Functionally, this protein is involved in the repair of mismatches in DNA. It is possible that it carries out the mismatch recognition step. This protein has a weak ATPase activity. The protein is DNA mismatch repair protein MutS of Photobacterium profundum (strain SS9).